Reading from the N-terminus, the 240-residue chain is Uridylate kinase (240 aa).

12-15 contacts ATP; that stretch reads KLSG. An involved in allosteric activation by GTP region spans residues 20–25; the sequence is GEQGFG. A UMP-binding site is contributed by Gly-54. The ATP site is built by Gly-55 and Arg-59. Residues Asp-74 and 135 to 142 each bind UMP; that span reads TGNPYFST. Asn-163, Tyr-169, and Asp-172 together coordinate ATP.

The protein belongs to the UMP kinase family. In terms of assembly, homohexamer.

The protein resides in the cytoplasm. The catalysed reaction is UMP + ATP = UDP + ADP. Its pathway is pyrimidine metabolism; CTP biosynthesis via de novo pathway; UDP from UMP (UMPK route): step 1/1. With respect to regulation, allosterically activated by GTP. Inhibited by UTP. In terms of biological role, catalyzes the reversible phosphorylation of UMP to UDP. The chain is Uridylate kinase from Bacillus cereus (strain ATCC 14579 / DSM 31 / CCUG 7414 / JCM 2152 / NBRC 15305 / NCIMB 9373 / NCTC 2599 / NRRL B-3711).